The sequence spans 151 residues: MGRMHSSGKGISSSALPYSRNAPSWFKLSSDDVVEQIIKYARKGLTPSQIGVILRDAHGVSQAKVVTGNKILRILKSNGLAPEIPEDLYYLIKKAVSVRKHLEKNRKDKDSKFRLILIESRIHRLARYYRTVAVLPPNWKYESATASALVA.

The protein belongs to the universal ribosomal protein uS15 family. Component of the small ribosomal subunit. Mature ribosomes consist of a small (40S) and a large (60S) subunit. The 40S subunit contains about 32 different proteins and 1 molecule of RNA (18S). The 60S subunit contains 45 different proteins and 3 molecules of RNA (25S, 5.8S and 5S).

It localises to the cytoplasm. In terms of biological role, component of the ribosome, a large ribonucleoprotein complex responsible for the synthesis of proteins in the cell. The small ribosomal subunit (SSU) binds messenger RNAs (mRNAs) and translates the encoded message by selecting cognate aminoacyl-transfer RNA (tRNA) molecules. The large subunit (LSU) contains the ribosomal catalytic site termed the peptidyl transferase center (PTC), which catalyzes the formation of peptide bonds, thereby polymerizing the amino acids delivered by tRNAs into a polypeptide chain. The nascent polypeptides leave the ribosome through a tunnel in the LSU and interact with protein factors that function in enzymatic processing, targeting, and the membrane insertion of nascent chains at the exit of the ribosomal tunnel. The polypeptide is Small ribosomal subunit protein uS15 (RPS13) (Candida albicans (strain SC5314 / ATCC MYA-2876) (Yeast)).